A 295-amino-acid polypeptide reads, in one-letter code: Nucleotide-binding protein Lxx11490 (295 aa).

Residue 19–26 (GMSGAGRS) participates in ATP binding. 70–73 (DVRG) is a binding site for GTP.

This sequence belongs to the RapZ-like family.

In terms of biological role, displays ATPase and GTPase activities. This chain is Nucleotide-binding protein Lxx11490, found in Leifsonia xyli subsp. xyli (strain CTCB07).